The chain runs to 177 residues: Trafficking regulator of GLUT4 1 (177 aa).

The Cytoplasmic segment spans residues M1 to L105. 3 positions are modified to phosphoserine: S48, S87, and S88. The disordered stretch occupies residues E71–T92. Residues A72 to S88 are compositionally biased toward low complexity. The segment at residues I106–I126 is an intramembrane region (helical). At S127–S153 the chain is on the cytoplasmic side. The chain crosses the membrane as a helical span at residues I154–V174. Over Q175–K177 the chain is Extracellular.

This sequence belongs to the CD225/Dispanin family. In terms of assembly, interacts with SLC2A4; the interaction is required for proper SLC2A4 reacycling after insulin stimulation. Expressed at high levels in heart, mammary gland, adrenal gland, stomach, smooth muscle and skeletal muscle, and at lower levels in brain and lung. Strongly down-regulated in lung cancer tissues, due to hypermethylation of the corresponding locus. Expressed in adipose tissue.

The protein resides in the cell membrane. It localises to the endomembrane system. The protein localises to the cytoplasm. It is found in the perinuclear region. Regulates insulin-mediated adipose tissue glucose uptake and transport by modulation of SLC2A4 recycling. Not required for SLC2A4 membrane fusion upon an initial stimulus, but rather is necessary for proper protein recycling during prolonged insulin stimulation. The sequence is that of Trafficking regulator of GLUT4 1 from Homo sapiens (Human).